The sequence spans 515 residues: Protein aaim-1 (515 aa).

The N-terminal stretch at Met1–Cys16 is a signal peptide. Residues Asn46 and Asn127 are each glycosylated (N-linked (GlcNAc...) asparagine). The interval Arg248–Gly267 is disordered. An N-linked (GlcNAc...) asparagine glycan is attached at Asn447.

In terms of tissue distribution, expressed in the terminal bulb of the pharynx and the posterior of the intestine (at protein level). Expressed by intestinal cells and secreted into the intestinal lumen (at protein level).

It is found in the secreted. In terms of biological role, plays a role in promoting resistance to bacterial pathogens such as P.aeruginosa by inhibiting bacterial intestinal colonization. Its function is as follows. (Microbial infection) Promotes infection by microsporidian pathogens such as N.parisii in the early larval stages of development. Involved in ensuring the proper orientation and location of the spore proteins of N.parisii during intestinal cell invasion. This Caenorhabditis elegans protein is Protein aaim-1.